Reading from the N-terminus, the 175-residue chain is Adenine phosphoribosyltransferase (175 aa).

Belongs to the purine/pyrimidine phosphoribosyltransferase family. As to quaternary structure, homodimer.

It is found in the cytoplasm. The enzyme catalyses AMP + diphosphate = 5-phospho-alpha-D-ribose 1-diphosphate + adenine. Its pathway is purine metabolism; AMP biosynthesis via salvage pathway; AMP from adenine: step 1/1. Functionally, catalyzes a salvage reaction resulting in the formation of AMP, that is energically less costly than de novo synthesis. The protein is Adenine phosphoribosyltransferase of Lactobacillus gasseri (strain ATCC 33323 / DSM 20243 / BCRC 14619 / CIP 102991 / JCM 1131 / KCTC 3163 / NCIMB 11718 / NCTC 13722 / AM63).